The primary structure comprises 320 residues: Malate dehydrogenase 2 (320 aa).

Residues 10-15 (GAGQIG) and Asp-34 contribute to the NAD(+) site. 2 residues coordinate substrate: Arg-83 and Arg-89. Residues Asn-96 and 119 to 121 (ITN) contribute to the NAD(+) site. Positions 121 and 152 each coordinate substrate. His-176 serves as the catalytic Proton acceptor.

It belongs to the LDH/MDH superfamily. MDH type 3 family.

The enzyme catalyses (S)-malate + NAD(+) = oxaloacetate + NADH + H(+). Its function is as follows. Catalyzes the reversible oxidation of malate to oxaloacetate. This Rhodopseudomonas palustris (strain BisB18) protein is Malate dehydrogenase 2.